We begin with the raw amino-acid sequence, 289 residues long: Protein SET (289 aa).

The segment at 1 to 42 (MAPKRQSAILPQPKKPRPVAAPKLEDKSASPGLPKGEKEQQE) is disordered. Ala2 carries the n,N,N-trimethylalanine modification. Ser7 is subject to Phosphoserine. The residue at position 11 (Pro11) is an N6-acetyllysine. Lys15 bears the Phosphoserine mark. Lys23 carries the N6-acetyllysine modification. A phosphoserine mark is found at Leu24, Ser28, and Ser62. The tract at residues 31–77 (PGLPKGEKEQQEAIEHIDEVQNEIDRLNEQASEEILKVEQKYNKLRQ) is dimerization. Lys67 is subject to N6-acetyllysine. Residues 78 to 224 (PFFQKRSELI…ELGEVIKDDI (147 aa)) are earmuff domain. Position 145 is a phosphotyrosine (Tyr145). The residue at position 149 (Lys149) is an N6-acetyllysine. Residue Lys153 forms a Glycyl lysine isopeptide (Lys-Gly) (interchain with G-Cter in ubiquitin) linkage. 2 disordered regions span residues 157–206 (LNES…TWFT) and 235–289 (PDMD…GEDD). Positions 168–180 (TEIKWKSGKDLTK) are enriched in basic and acidic residues. Lys171 is subject to N6-acetyllysine. The segment covering 236-289 (DMDDEEGEAEDDDDDDEEEEGLEDIDEEGDEDEGEEDDDEDEGEEGEEDEGEDD) has biased composition (acidic residues).

This sequence belongs to the nucleosome assembly protein (NAP) family. Headphone-shaped homodimer. Isoform 1 and isoform 2 interact directly with each other and with ANP32A within the tripartite INHAT (inhibitor of acetyltransferases) complex. Isoform 1 and isoform 2 interact also with histones. Isoform 2 is a omponent of the SET complex, composed of at least ANP32A, APEX1, HMGB2, NME1, SET and TREX1, but not NME2 or TREX2. Within this complex, directly interacts with ANP32A, NME1, HMGB2 and TREX1; the interaction with ANP32A is enhanced after cleavage. Interacts with APBB1, CHTOP, SETBP1, SGO1. In terms of processing, isoform 2 is phosphorylated on Ser-15 and Ser-24. Isoform 2 is acetylated on Lys-11. Post-translationally, some glutamate residues are glycylated by TTLL8. This modification occurs exclusively on glutamate residues and results in a glycine chain on the gamma-carboxyl group. In terms of processing, N-terminus of isoform 1 is methylated by METTL11A/NTM1. Mainly trimethylated. Cleaved after Lys-176 by GZMA. The cleavage inhibits its nucleosome assembly activity and disrupts the inhibition on NME1. In terms of tissue distribution, widely expressed, with higher expression in brain, thymus, spleen and bone marrow, and lower expression in heart, liver and muscle.

It is found in the cytoplasm. The protein resides in the cytosol. Its subcellular location is the endoplasmic reticulum. It localises to the nucleus. The protein localises to the nucleoplasm. Multitasking protein, involved in apoptosis, transcription, nucleosome assembly and histone chaperoning. Isoform 2 anti-apoptotic activity is mediated by inhibition of the GZMA-activated DNase, NME1. In the course of cytotoxic T-lymphocyte (CTL)-induced apoptosis, GZMA cleaves SET, disrupting its binding to NME1 and releasing NME1 inhibition. Isoform 1 and isoform 2 are potent inhibitors of protein phosphatase 2A. Isoform 1 and isoform 2 inhibit EP300/CREBBP and PCAF-mediated acetylation of histones (HAT) and nucleosomes, most probably by masking the accessibility of lysines of histones to the acetylases. The predominant target for inhibition is histone H4. HAT inhibition leads to silencing of HAT-dependent transcription and prevents active demethylation of DNA. Both isoforms stimulate DNA replication of the adenovirus genome complexed with viral core proteins; however, isoform 2 specific activity is higher. The sequence is that of Protein SET (Set) from Rattus norvegicus (Rat).